The following is a 328-amino-acid chain: Malate dehydrogenase (328 aa).

11 to 17 (GAAGQIG) contributes to the NAD(+) binding site. Substrate is bound by residues R94 and R100. Residues N107, Q114, and 131 to 133 (VGN) contribute to the NAD(+) site. Substrate contacts are provided by N133 and R164. Residue H189 is the Proton acceptor of the active site.

It belongs to the LDH/MDH superfamily. MDH type 2 family.

The enzyme catalyses (S)-malate + NAD(+) = oxaloacetate + NADH + H(+). Functionally, catalyzes the reversible oxidation of malate to oxaloacetate. The polypeptide is Malate dehydrogenase (Xanthomonas campestris pv. campestris (strain 8004)).